The primary structure comprises 737 residues: Cellulose synthase-like protein E1 (737 aa).

2 helical membrane-spanning segments follow: residues 26 to 45 (AVYRVQAATVAAGILLVLYY) and 58 to 78 (AAWLGMAAAELWFAVYWVIAQ). Active-site residues include Asp146 and Asp451. The next 5 membrane-spanning stretches (helical) occupy residues 528 to 548 (LWAANSLPTLYYVVIPSLGLV), 551 to 571 (TPLFPQIMSPWATPFIYVFCV), 654 to 674 (VIIATVALLNFVCLVGGLSQI), 683 to 703 (WNVFLPQAILCGMIVIINMPI), and 716 to 736 (IPTAVTLASIGFVMLAFLVPI).

The protein belongs to the glycosyltransferase 2 family. Plant cellulose synthase-like E subfamily.

The protein localises to the golgi apparatus membrane. Functionally, thought to be a Golgi-localized beta-glycan synthase that polymerize the backbones of noncellulosic polysaccharides (hemicelluloses) of plant cell wall. The polypeptide is Cellulose synthase-like protein E1 (CSLE1) (Oryza sativa subsp. japonica (Rice)).